Reading from the N-terminus, the 289-residue chain is Acetyl-coenzyme A carboxylase carboxyl transferase subunit beta (289 aa).

One can recognise a CoA carboxyltransferase N-terminal domain in the interval 28–289; it reads VMTKCPKCKK…QGEGMAVWQN (262 aa). Zn(2+) contacts are provided by Cys32, Cys35, Cys51, and Cys54. A C4-type zinc finger spans residues 32 to 54; that stretch reads CPKCKKIMYTKELLKNLKVCVNC.

The protein belongs to the AccD/PCCB family. As to quaternary structure, acetyl-CoA carboxylase is a heterohexamer composed of biotin carboxyl carrier protein (AccB), biotin carboxylase (AccC) and two subunits each of ACCase subunit alpha (AccA) and ACCase subunit beta (AccD). Zn(2+) serves as cofactor.

It localises to the cytoplasm. The enzyme catalyses N(6)-carboxybiotinyl-L-lysyl-[protein] + acetyl-CoA = N(6)-biotinyl-L-lysyl-[protein] + malonyl-CoA. Its pathway is lipid metabolism; malonyl-CoA biosynthesis; malonyl-CoA from acetyl-CoA: step 1/1. In terms of biological role, component of the acetyl coenzyme A carboxylase (ACC) complex. Biotin carboxylase (BC) catalyzes the carboxylation of biotin on its carrier protein (BCCP) and then the CO(2) group is transferred by the transcarboxylase to acetyl-CoA to form malonyl-CoA. This is Acetyl-coenzyme A carboxylase carboxyl transferase subunit beta from Bacillus cytotoxicus (strain DSM 22905 / CIP 110041 / 391-98 / NVH 391-98).